Reading from the N-terminus, the 298-residue chain is Protein BZR1 homolog 1 (298 aa).

4 disordered regions span residues 1–25, 71–129, 153–175, and 190–217; these read MTSGAAAAGRTPTWKERENNKRRER, GTTY…SPSR, VSSSAPVTPPLSSPTASRPPKIR, and AVSAPASPTRGRRLEHPDTIPECDESDV. The tract at residues 10-91 is required for DNA-binding; it reads RTPTWKEREN…PSSAGGASVG (82 aa). Residues 96-128 show a composition bias toward low complexity; it reads SSTQLLSAPSSSFPSPVPSYHASPASSSFPSPS. Ser-156 carries the phosphoserine modification. The segment at 204–224 is PEST-like; it reads EHPDTIPECDESDVSTVDSGR.

Belongs to the BZR/LAT61 family. As to quaternary structure, interacts with GF14C. Interacts with PUB24. Interacts with SMOS1. Post-translationally, phosphorylated on serine and threonine residues by GSK2. Dephosphorylated during response to brassinosteroid. In terms of processing, ubiquitinated by PUB24. Ubiquitination leads to its subsequent degradation by the 26S proteasome, thus reducing sensitivity to brassinosteroid signaling.

The protein localises to the nucleus. It is found in the cytoplasm. In terms of biological role, positive brassinosteroid-signaling protein. Mediates downstream brassinosteroid-regulated growth response and feedback inhibition of brassinosteroid (BR) biosynthetic genes. May act as transcriptional repressor by binding the brassinosteroid-response element (BREE) (5'-CGTG(T/C)G-3') in the promoter of DLT (AC Q9LWU9), another positive regulator of BR signaling. Acts as a transcriptional repressor of LIC, a negative regulator of BR signaling, by binding to the BRRE element of its promoter. BZR1 and LIC play opposite roles in BR signaling and regulation of leaf bending. The chain is Protein BZR1 homolog 1 from Oryza sativa subsp. japonica (Rice).